A 757-amino-acid chain; its full sequence is 5-methyltetrahydropteroyltriglutamate--homocysteine methyltransferase (757 aa).

5-methyltetrahydropteroyltri-L-glutamate is bound by residues 16–19 and Lys112; that span reads RELK. L-homocysteine-binding positions include 432 to 434 and Glu485; that span reads IGS. L-methionine-binding positions include 432 to 434 and Glu485; that span reads IGS. Residues 516–517 and Trp562 contribute to the 5-methyltetrahydropteroyltri-L-glutamate site; that span reads RC. Asp600 contacts L-homocysteine. Asp600 contacts L-methionine. Glu606 lines the 5-methyltetrahydropteroyltri-L-glutamate pocket. Residues His642, Cys644, and Glu666 each coordinate Zn(2+). His695 (proton donor) is an active-site residue. Cys727 provides a ligand contact to Zn(2+).

Belongs to the vitamin-B12 independent methionine synthase family. Zn(2+) serves as cofactor.

It carries out the reaction 5-methyltetrahydropteroyltri-L-glutamate + L-homocysteine = tetrahydropteroyltri-L-glutamate + L-methionine. Its pathway is amino-acid biosynthesis; L-methionine biosynthesis via de novo pathway; L-methionine from L-homocysteine (MetE route): step 1/1. Catalyzes the transfer of a methyl group from 5-methyltetrahydrofolate to homocysteine resulting in methionine formation. This is 5-methyltetrahydropteroyltriglutamate--homocysteine methyltransferase from Actinobacillus pleuropneumoniae serotype 5b (strain L20).